The sequence spans 246 residues: Probable transcriptional regulatory protein YebC (246 aa).

The tract at residues 1–20 is disordered; that stretch reads MAGHSKWANTRHRKAAQDAK.

Belongs to the TACO1 family.

It is found in the cytoplasm. The chain is Probable transcriptional regulatory protein YebC from Salmonella typhimurium (strain LT2 / SGSC1412 / ATCC 700720).